The chain runs to 156 residues: Small ribosomal subunit protein uS7 (156 aa).

It belongs to the universal ribosomal protein uS7 family. Part of the 30S ribosomal subunit. Contacts proteins S9 and S11.

Its function is as follows. One of the primary rRNA binding proteins, it binds directly to 16S rRNA where it nucleates assembly of the head domain of the 30S subunit. Is located at the subunit interface close to the decoding center, probably blocks exit of the E-site tRNA. In Colwellia psychrerythraea (strain 34H / ATCC BAA-681) (Vibrio psychroerythus), this protein is Small ribosomal subunit protein uS7.